Reading from the N-terminus, the 177-residue chain is Ribonuclease clavin (177 aa).

Residues 1–27 form the signal peptide; the sequence is MVAIKNLVLVALTAVTALAMPSPLEER. Cystine bridges form between C33-C175 and C103-C159. Residue H77 is part of the active site. The disordered stretch occupies residues 98-117; it reads WGNSDCDRPPKHSKNGDGKN. Residues 102-117 show a composition bias toward basic and acidic residues; sequence DCDRPPKHSKNGDGKN. Residue E123 is the Proton acceptor of the active site. Catalysis depends on H164, which acts as the Proton donor.

It belongs to the ribonuclease U2 family.

The protein resides in the secreted. In terms of biological role, clavin has the same substrate specificity as alpha-sarcin. It is specific for purines in both single- and double-stranded RNA. Its toxic action on eukaryotic cells is the result of cleavage of a single phosphodiester bond in the 60S subunit of ribosomes. The chain is Ribonuclease clavin (cla) from Aspergillus clavatus (strain ATCC 1007 / CBS 513.65 / DSM 816 / NCTC 3887 / NRRL 1 / QM 1276 / 107).